The sequence spans 149 residues: Oligosaccharyltransferase complex subunit ostc-B (149 aa).

At 1–32 (MESLYRIPFTVLECPNLKLKKPSWLHMPSAMT) the chain is on the cytoplasmic side. A helical transmembrane segment spans residues 33–53 (VYAMVVVSYFLITGGIIYDVI). Over 54-83 (VEPPSVGSMTDEHGHQRPVAFLAYRVNGQY) the chain is Extracellular. A helical transmembrane segment spans residues 84-104 (IMEGLASSFLFTMGGLGFIIL). The Cytoplasmic segment spans residues 105 to 117 (DRSNAPNIPKLNR). The helical transmembrane segment at 118–138 (FLLLFIGFVCVLLSFFMARVF) threads the bilayer. Topologically, residues 139–149 (MRMKLPGYLMG) are extracellular.

It belongs to the OSTC family. As to quaternary structure, specific component of the STT3A-containing form of the oligosaccharyltransferase (OST) complex.

It is found in the membrane. Its pathway is protein modification; protein glycosylation. Functionally, specific component of the STT3A-containing form of the oligosaccharyl transferase (OST) complex that catalyzes the initial transfer of a defined glycan (Glc(3)Man(9)GlcNAc(2) in eukaryotes) from the lipid carrier dolichol-pyrophosphate to an asparagine residue within an Asn-X-Ser/Thr consensus motif in nascent polypeptide chains, the first step in protein N-glycosylation. N-glycosylation occurs cotranslationally and the complex associates with the Sec61 complex at the channel-forming translocon complex that mediates protein translocation across the endoplasmic reticulum (ER). All subunits are required for a maximal enzyme activity. The sequence is that of Oligosaccharyltransferase complex subunit ostc-B from Xenopus laevis (African clawed frog).